The primary structure comprises 664 residues: Ubiquinol oxidase subunit 1 (664 aa).

The next 2 helical transmembrane spans lie at 15–35 (PILV…LGLI) and 57–77 (LAAM…ADAI). His106 is a binding site for heme b. The next 12 membrane-spanning stretches (helical) occupy residues 109-129 (IMIF…IVPL), 136-156 (VAFP…FILV), 190-210 (YIWA…NFFV), 233-253 (LCAS…VGLL), 278-298 (LIWA…FGVF), 316-336 (MVYA…HHFF), 347-367 (FFGI…FNWL), 383-403 (WAVG…MLAI), 414-434 (LFLI…GYIC), 456-476 (AFWF…IVGF), 490-510 (AWHP…LGIA), and 603-623 (ALIF…VGLV). Cu cation contacts are provided by His284, Tyr288, His333, and His334. The 1'-histidyl-3'-tyrosine (His-Tyr) cross-link spans 284-288 (HPEVY). His419 is a Fe(II)-heme a binding site. His421 contacts heme b.

This sequence belongs to the heme-copper respiratory oxidase family. In terms of assembly, heterotetramer of the subunits 1, 2, 3 and 4.

It localises to the cell membrane. Catalytic subunit of the enzyme. Electrons originating in a quinol are transferred to the bimetallic center formed by heme a and copper B. The chain is Ubiquinol oxidase subunit 1 (cyaA) from Acetobacter aceti.